A 69-amino-acid polypeptide reads, in one-letter code: UPF0434 protein Rmet_0534 (69 aa).

It belongs to the UPF0434 family.

In Cupriavidus metallidurans (strain ATCC 43123 / DSM 2839 / NBRC 102507 / CH34) (Ralstonia metallidurans), this protein is UPF0434 protein Rmet_0534.